The following is a 451-amino-acid chain: Phosphoglucosamine mutase (451 aa).

The active-site Phosphoserine intermediate is Ser101. Mg(2+)-binding residues include Ser101, Asp240, Asp242, and Asp244. Residue Ser101 is modified to Phosphoserine.

This sequence belongs to the phosphohexose mutase family. Mg(2+) serves as cofactor. Activated by phosphorylation.

It carries out the reaction alpha-D-glucosamine 1-phosphate = D-glucosamine 6-phosphate. In terms of biological role, catalyzes the conversion of glucosamine-6-phosphate to glucosamine-1-phosphate. The chain is Phosphoglucosamine mutase from Streptococcus pyogenes serotype M2 (strain MGAS10270).